A 225-amino-acid polypeptide reads, in one-letter code: Uracil-DNA glycosylase (225 aa).

Asp65 serves as the catalytic Proton acceptor.

This sequence belongs to the uracil-DNA glycosylase (UDG) superfamily. UNG family.

Its subcellular location is the cytoplasm. The enzyme catalyses Hydrolyzes single-stranded DNA or mismatched double-stranded DNA and polynucleotides, releasing free uracil.. Its function is as follows. Excises uracil residues from the DNA which can arise as a result of misincorporation of dUMP residues by DNA polymerase or due to deamination of cytosine. This is Uracil-DNA glycosylase from Bacillus cereus (strain B4264).